Reading from the N-terminus, the 348-residue chain is Lipopolysaccharide heptosyltransferase 2 (348 aa).

This sequence belongs to the glycosyltransferase 9 family.

The enzyme catalyses an L-alpha-D-Hep-(1-&gt;5)-[alpha-Kdo-(2-&gt;4)]-alpha-Kdo-(2-&gt;6)-lipid A + ADP-L-glycero-beta-D-manno-heptose = an L-alpha-D-Hep-(1-&gt;3)-L-alpha-D-Hep-(1-&gt;5)-[alpha-Kdo-(2-&gt;4)]-alpha-Kdo-(2-&gt;6)-lipid A + ADP + H(+). The protein operates within bacterial outer membrane biogenesis; LPS core biosynthesis. Functionally, glycosyltransferase involved in the biosynthesis of the core oligosaccharide region of lipopolysaccharide (LPS). Catalyzes the addition of the second heptose unit to the heptosyl-Kdo2-lipid A module. This is Lipopolysaccharide heptosyltransferase 2 from Salmonella typhimurium (strain LT2 / SGSC1412 / ATCC 700720).